Reading from the N-terminus, the 118-residue chain is MPRVKRGVTARARHKKVIDAAKGYRGRRNNVYRIAKQAVMRAGQYAYRDRRNKKRVFRALWIARINAATREHGMTYSVFMNGLKKASIELDRKVLSDMAIHDKPAFAAIVNQVKATVA.

The protein belongs to the bacterial ribosomal protein bL20 family.

Its function is as follows. Binds directly to 23S ribosomal RNA and is necessary for the in vitro assembly process of the 50S ribosomal subunit. It is not involved in the protein synthesizing functions of that subunit. This Cupriavidus metallidurans (strain ATCC 43123 / DSM 2839 / NBRC 102507 / CH34) (Ralstonia metallidurans) protein is Large ribosomal subunit protein bL20.